Consider the following 1096-residue polypeptide: Adenylate-forming reductase Nps9 (1096 aa).

Residues 39–352 (DDTLTEISFL…TTEFGAPTQL (314 aa)) form an adenylation (A) domain region. Residues histidine 236, 339-340 (VQ), threonine 344, and 425-428 (IIGR) contribute to the AMP site. One can recognise a Carrier domain in the interval 569 to 656 (EWTVSTLEHW…LLADRVAKIA (88 aa)). Position 605 is an O-(pantetheine 4'-phosphoryl)serine (serine 605). The reductase (R) domain stretch occupies residues 716–952 (LTGSTGGLGS…MPAEKVSAAI (237 aa)). Residues 720 to 723 (TGGL), 807 to 809 (SAW), tyrosine 880, and lysine 884 each bind NADP(+).

Belongs to the adenylate-forming reductase family.

Functionally, adenylate-forming reductase, a natural product biosynthesis enzyme that resembles non-ribosomal peptide synthetases, yet serves to modify one substrate, rather than to condense two or more building blocks. The A-domain preferentially accepts L-threonine as substrate. The natural product of the enzyme is not yet known. This Serpula lacrymans var. lacrymans (strain S7.9) (Dry rot fungus) protein is Adenylate-forming reductase Nps9.